The sequence spans 77 residues: Large ribosomal subunit protein bL28 (77 aa).

Belongs to the bacterial ribosomal protein bL28 family.

This is Large ribosomal subunit protein bL28 from Polynucleobacter asymbioticus (strain DSM 18221 / CIP 109841 / QLW-P1DMWA-1) (Polynucleobacter necessarius subsp. asymbioticus).